A 360-amino-acid chain; its full sequence is Protein NDRG2 (360 aa).

Residues 324–360 form a disordered region; the sequence is SRTASLSSEGNRSRSRTLSQSSESGGGPPAPLAEVTC.

It belongs to the NDRG family.

The protein resides in the cytoplasm. In terms of biological role, contributes to the regulation of the Wnt signaling pathway. Down-regulates CTNNB1-mediated transcriptional activation of target genes. May be involved in neuron differentiation. The polypeptide is Protein NDRG2 (ndrg2) (Xenopus laevis (African clawed frog)).